Consider the following 359-residue polypeptide: Peptide chain release factor 1 (359 aa).

Residue Gln-235 is modified to N5-methylglutamine. Residues 283–309 (QKAESERSQARRSQVGSGDRSERIRTY) are disordered.

Belongs to the prokaryotic/mitochondrial release factor family. Post-translationally, methylated by PrmC. Methylation increases the termination efficiency of RF1.

It localises to the cytoplasm. Functionally, peptide chain release factor 1 directs the termination of translation in response to the peptide chain termination codons UAG and UAA. This Brucella melitensis biotype 2 (strain ATCC 23457) protein is Peptide chain release factor 1.